Consider the following 415-residue polypeptide: UDP-galactose transporter homolog 1 (415 aa).

The tract at residues 1 to 39 (MHLVPEGSESMSTQQNGSAQKPVTLNGSASTKGQAPEAP) is disordered. The span at 9 to 33 (ESMSTQQNGSAQKPVTLNGSASTKG) shows a compositional bias: polar residues. 2 N-linked (GlcNAc...) asparagine glycosylation sites follow: Asn-16 and Asn-26. The next 5 membrane-spanning stretches (helical) occupy residues 45 to 65 (LIQL…WGVL), 95 to 115 (IVLN…YLYF), 132 to 152 (ILFP…FGYA), 161 to 181 (TFIL…LTIF), and 185 to 205 (YPLY…TFTL). Asn-221 is a glycosylation site (N-linked (GlcNAc...) asparagine). The chain crosses the membrane as a helical span at residues 223-243 (SGSSLYGIFLLSINLLLDGLT). Asn-244 carries N-linked (GlcNAc...) asparagine glycosylation. Transmembrane regions (helical) follow at residues 281 to 301 (LLVM…PIPI), 325 to 345 (NVLG…YTLS), and 368 to 388 (VFWF…LVFG).

This sequence belongs to the nucleotide-sugar transporter family. SLC35B subfamily.

Its subcellular location is the endoplasmic reticulum membrane. Functionally, may be involved in specific transport of UDP-Gal from the cytosol to the Golgi lumen. Involved in the maintenance of optimal conditions for the folding of secretory pathway proteins in the endoplasmic reticulum. In Aspergillus fumigatus (strain ATCC MYA-4609 / CBS 101355 / FGSC A1100 / Af293) (Neosartorya fumigata), this protein is UDP-galactose transporter homolog 1 (hut1).